A 211-amino-acid polypeptide reads, in one-letter code: Beta-crystallin B3 (211 aa).

A disordered region spans residues 1-21; it reads MTEQQSPPEQMVTGEGAGERG. The interval 1–23 is N-terminal arm; the sequence is MTEQQSPPEQMVTGEGAGERGGN. 2 Beta/gamma crystallin 'Greek key' domains span residues 24 to 63 and 64 to 108; these read YKITIYELENFQGRRCELSEELPNVVDKALEKVGSIQVES and GPWL…RPLQ. The tract at residues 109-113 is connecting peptide; sequence IDSPD. 2 Beta/gamma crystallin 'Greek key' domains span residues 114-155 and 156-198; these read HKIH…RALN and GTWV…RRVR. The interval 200–211 is C-terminal arm; that stretch reads QQWHQRGSFENS.

It belongs to the beta/gamma-crystallin family. As to quaternary structure, homo/heterodimer, or complexes of higher-order. The structure of beta-crystallin oligomers seems to be stabilized through interactions between the N-terminal arms.

Its function is as follows. Crystallins are the dominant structural components of the vertebrate eye lens. The chain is Beta-crystallin B3 (CRYBB3) from Gallus gallus (Chicken).